A 289-amino-acid polypeptide reads, in one-letter code: MKIKTKQFRVGEGEKVDLGKWPTKVDPFYESKEHYHELLRTQVERLSDLQQLLYASNRHAVLLIFQAMDAAGKDGVIRHVLSGINPQGCQVFSFKHPSATELQHDFLWRTTRDLPERGRIGVFNRSYYEEVLIVRVHPDILQSEAVPNGENFGKSFWHKRYRSIRNLEQHLHANGTRIVKFFLHLSKDEQRKRFLARIDEPEKNWKFSAADLEERQYWDDYMDAYEKCLSETSSEDSPWYAVPADDKENARLIVSQVIAETMESLKMSYPETTPARRKELLQMRQQLLK.

The protein belongs to the polyphosphate kinase 2 (PPK2) family. Class I subfamily.

It catalyses the reaction [phosphate](n) + ATP = [phosphate](n+1) + ADP. Uses inorganic polyphosphate (polyP) as a donor to convert ADP to ATP. The sequence is that of ADP-polyphosphate phosphotransferase from Rhodopseudomonas palustris (strain ATCC BAA-98 / CGA009).